Consider the following 1145-residue polypeptide: Protein sumv-2 (1145 aa).

The span at 1–13 shows a compositional bias: basic residues; it reads MKPGRKSLPKKNR. 5 disordered regions span residues 1–310, 429–464, 999–1025, 1040–1059, and 1073–1145; these read MKPG…APPA, QSRT…QKAR, HSAS…AGSE, QIAA…PRTE, and ITTG…ISLI. Residues 14 to 34 are compositionally biased toward polar residues; sequence ASNITEKMPTTSTEAQSSSSK. 2 stretches are compositionally biased toward basic and acidic residues: residues 73-104 and 216-225; these read KTTE…EPRK and VPEKKPKIED. Residues 226 to 248 are compositionally biased toward low complexity; sequence APTTSSPKKSTPTSAPPTRASAR. A compositionally biased stretch (basic and acidic residues) spans 455–464; the sequence is GDEKRQQKAR. The span at 999–1013 shows a compositional bias: low complexity; sequence HSASSSAAPSPVGAS. A compositionally biased stretch (basic and acidic residues) spans 1091–1102; sequence VIERGDFRDHRP. Pro residues predominate over residues 1121–1136; it reads QQPPLPSPAPPPPRGP.

Influences the activity of genes involved in vulval development. This Caenorhabditis elegans protein is Protein sumv-2.